We begin with the raw amino-acid sequence, 529 residues long: MSSEKMPIETLQADEHRFAIILGAGAAGIIQGCTFIREKTLPLEEFQILERQSAFGGVWWKNTYPGAACDIPSHEYQISFALNPYWSRTFAPQPEIQKYFEDVALQYELHKSTTFNTEIVEAKWDDSRLLWLVETTDLTTGDTKLWSCHVLIGALGAFTVPKKAPVKNVDAFKGEEWHSVDWPKNANLKGKTVAVIGTGPSACQFIPNIYPEVKSLIVYQRSPGHVLPRNDVVVGSLTKWMFAHIPFLMRFNRWFWMKKDEILRPRLFTVGSWLQKIVISMTRNHLYKQIKDDTLRRKLESKDVFGCKRPLMLSDYYPIFNNDNVELVTDSVTELTENGIKSRNTDTGEEMERETDVLIWGTGYNPVDFGLPVPTKGRSGQLLCDKYQPELFSLYGVAVDDFPNYFNFLGPNSSSFETSVMELFELQAHHNSIATEYLFQKNVGTFRYAIMPKEERVRSWTLSLRPGQAKLPPANPNCKSYYRSKIGHVYRYPYPYWQYKALIAKLDFKRDWVLLQQRIGQKEVKVLEF.

FAD is bound by residues 58-61 (VWWK), 70-71 (DI), and Tyr-76. 68–70 (ACD) serves as a coordination point for NADP(+). Residues 198–204 (TGPSACQ) and 221–222 (RS) each bind NADP(+).

This sequence belongs to the FAD-binding monooxygenase family. The cofactor is FAD.

It participates in polyketide biosynthesis. Its function is as follows. FAD-binding monooxygenase; part of the gene cluster A that mediates the biosynthesis of botcinic acid and its botcinin derivatives, acetate-derived polyketides that contribute to virulence when combined with the sesquiterpene botrydial. Botcinic acid and its derivatives have been shown to induce chlorosis and necrosis during host plant infection, but also have antifungal activities. Two polyketide synthases, BOA6 and BOA9, are involved in the biosynthesis of botcinins. BOA6 mediates the formation of the per-methylated tetraketide core by condensation of four units of malonyl-CoA with one unit of acetyl-CoA, which would be methylated in activated methylene groups to yield a bicyclic acid intermediate that could then either be converted to botrylactone derivatives or lose the starter acetate unit through a retro-Claisen type C-C bond cleavage to yield botcinin derivatives. The second polyketide synthase, BOA9, is probably required for the biosynthesis of the tetraketide side chain of botcinins. The methyltransferase (MT) domain within BOA6 is probably responsible for the incorporation of four methyl groups. The trans-enoyl reductase BOA5 might take over the enoyl reductase function of BOA6 that misses an ER domain. The monooxygenases BOA2, BOA3 and BOA4 might be involved in further hydroxylations at C4, C5 and C8, whereas BOA7, close to BOA9, could potentially be involved in the hydroxylation at C4 in the side chain of botcinins. The polypeptide is FAD-binding monooxygenase BOA2 (Botryotinia fuckeliana (strain B05.10) (Noble rot fungus)).